A 235-amino-acid polypeptide reads, in one-letter code: 6-carboxyhexanoate--CoA ligase (235 aa).

It belongs to the BioW family. As to quaternary structure, homodimer. The cofactor is Mg(2+).

The catalysed reaction is heptanedioate + ATP + CoA = 6-carboxyhexanoyl-CoA + AMP + diphosphate. It participates in metabolic intermediate metabolism; pimeloyl-CoA biosynthesis; pimeloyl-CoA from pimelate: step 1/1. Catalyzes the transformation of pimelate into pimeloyl-CoA with concomitant hydrolysis of ATP to AMP. The protein is 6-carboxyhexanoate--CoA ligase of Desulfovibrio desulfuricans (strain ATCC 27774 / DSM 6949 / MB).